A 283-amino-acid chain; its full sequence is Thymidylate synthase (283 aa).

Arginine 22 contacts dUMP. The active-site Nucleophile is cysteine 160. Residues 180–183 (RSCD), asparagine 191, and 221–223 (HIY) contribute to the dUMP site. Aspartate 183 is a (6R)-5,10-methylene-5,6,7,8-tetrahydrofolate binding site. Position 282 (serine 282) interacts with (6R)-5,10-methylene-5,6,7,8-tetrahydrofolate.

The protein belongs to the thymidylate synthase family. Bacterial-type ThyA subfamily. In terms of assembly, homodimer.

It is found in the cytoplasm. It catalyses the reaction dUMP + (6R)-5,10-methylene-5,6,7,8-tetrahydrofolate = 7,8-dihydrofolate + dTMP. It participates in pyrimidine metabolism; dTTP biosynthesis. In terms of biological role, catalyzes the reductive methylation of 2'-deoxyuridine-5'-monophosphate (dUMP) to 2'-deoxythymidine-5'-monophosphate (dTMP) while utilizing 5,10-methylenetetrahydrofolate (mTHF) as the methyl donor and reductant in the reaction, yielding dihydrofolate (DHF) as a by-product. This enzymatic reaction provides an intracellular de novo source of dTMP, an essential precursor for DNA biosynthesis. The sequence is that of Thymidylate synthase from Haemophilus influenzae (strain PittEE).